Here is a 245-residue protein sequence, read N- to C-terminus: Uridylate kinase (245 aa).

14–17 (KLSG) contributes to the ATP binding site. A UMP-binding site is contributed by G56. Residues G57 and R61 each contribute to the ATP site. UMP is bound by residues D76 and 137–144 (TGLPFFTT). Positions 164, 170, and 173 each coordinate ATP.

It belongs to the UMP kinase family. In terms of assembly, homohexamer.

It localises to the cytoplasm. It carries out the reaction UMP + ATP = UDP + ADP. It functions in the pathway pyrimidine metabolism; CTP biosynthesis via de novo pathway; UDP from UMP (UMPK route): step 1/1. With respect to regulation, inhibited by UTP. Functionally, catalyzes the reversible phosphorylation of UMP to UDP. The sequence is that of Uridylate kinase from Syntrophobacter fumaroxidans (strain DSM 10017 / MPOB).